The primary structure comprises 361 residues: Peptide chain release factor 1 (361 aa).

Position 237 is an N5-methylglutamine (Q237). Over residues 287–297 (KQQKEQSDTRK) the composition is skewed to basic and acidic residues. The tract at residues 287 to 313 (KQQKEQSDTRKSLVGSGDRSERIRTYN) is disordered.

The protein belongs to the prokaryotic/mitochondrial release factor family. In terms of processing, methylated by PrmC. Methylation increases the termination efficiency of RF1.

It is found in the cytoplasm. In terms of biological role, peptide chain release factor 1 directs the termination of translation in response to the peptide chain termination codons UAG and UAA. The polypeptide is Peptide chain release factor 1 (Francisella tularensis subsp. holarctica (strain FTNF002-00 / FTA)).